A 520-amino-acid polypeptide reads, in one-letter code: Phospholipase C A (520 aa).

The segment at residues Met-1 to Ala-38 is a signal peptide (tat-type signal).

It belongs to the bacterial phospholipase C family. In terms of processing, predicted to be exported by the Tat system. The position of the signal peptide cleavage has not been experimentally proven.

It localises to the secreted. It is found in the cell wall. The catalysed reaction is a 1,2-diacyl-sn-glycero-3-phosphocholine + H2O = phosphocholine + a 1,2-diacyl-sn-glycerol + H(+). In terms of biological role, involved in virulence. Induces cytotoxic effects on mouse macrophage cell lines, via direct or indirect enzymatic hydrolysis of cell membrane phospholipids. Hydrolyzes phosphatidylcholine. This Mycobacterium tuberculosis (strain CDC 1551 / Oshkosh) protein is Phospholipase C A.